We begin with the raw amino-acid sequence, 407 residues long: F-box protein SKIP23 (407 aa).

In terms of domain architecture, F-box spans 2 to 50 (VDWSTLPKDLLDLISKSLESSFDLIQFRSVCSSWRSAAEPKSPLPTHHL).

In terms of assembly, part of a SCF (ASK-cullin-F-box) protein ligase complex. Interacts with SKP1A/ASK1.

It is found in the nucleus. It functions in the pathway protein modification; protein ubiquitination. Component of SCF(ASK-cullin-F-box) E3 ubiquitin ligase complexes, which may mediate the ubiquitination and subsequent proteasomal degradation of target proteins. This Arabidopsis thaliana (Mouse-ear cress) protein is F-box protein SKIP23 (SKIP23).